The following is a 510-amino-acid chain: Protein disulfide-isomerase (510 aa).

The first 19 residues, 1–19 (MLRRALLCLAVAAAPGLYA), serve as a signal peptide directing secretion. One can recognise a Thioredoxin 1 domain in the interval 20–136 (DAPEEEDHVL…IVNWLKKRTG (117 aa)). Residues Cys-55 and Cys-58 each act as nucleophile in the active site. Cys-55 and Cys-58 are joined by a disulfide. Lys-202 carries the N6-acetyllysine modification. N6-succinyllysine occurs at positions 224 and 273. Ser-333 and Ser-359 each carry phosphoserine. The 127-residue stretch at 351 to 477 (GKIKPHLMSQ…FKKFLESGGQ (127 aa)) folds into the Thioredoxin 2 domain. Catalysis depends on nucleophile residues Cys-399 and Cys-402. A disulfide bond links Cys-399 and Cys-402. Ser-429 carries the phosphoserine modification. Residues 473-510 (ESGGQDGAGDDDDLEDLEEAEEPDMEEDDDQKAVKDEL) are disordered. A compositionally biased stretch (acidic residues) spans 480–502 (AGDDDDLEDLEEAEEPDMEEDDD). The Prevents secretion from ER motif lies at 507-510 (KDEL).

It belongs to the protein disulfide isomerase family. As to quaternary structure, heterodimer; heterodimerizes with the protein microsomal triglyceride transfer MTTP. Homodimer. Homodimer. Monomers and homotetramers may also occur. Interacts with P4HA2, forming a heterotetramer consisting of 2 alpha subunits (P4HA2) and 2 beta (P4HB), where P4HB plays the role of a structural subunit; this tetramer catalyzes the formation of 4-hydroxyproline in collagen. Also constitutes the structural subunit of the microsomal triacylglycerol transfer protein MTTP in mammalian cells. Stabilizes both enzymes and retain them in the ER without contributing to the catalytic activity. Binds UBQLN1. Interacts with ERO1B. Interacts with ILDR2. Interacts with ERN1/IRE1A (via N-terminus); the interaction is enhanced by phosphorylation of P4HB by FAM20C in response to endoplasmic reticulum stress and results in attenuation of ERN1 activity. Phosphorylation of Ser-359 by FAM20C is induced by endoplasmic reticulum stress and results in a functional switch from oxidoreductase to molecular chaperone. It also promotes interaction with ERN1.

The protein resides in the endoplasmic reticulum. The protein localises to the endoplasmic reticulum lumen. It localises to the melanosome. Its subcellular location is the cell membrane. It carries out the reaction Catalyzes the rearrangement of -S-S- bonds in proteins.. Its function is as follows. This multifunctional protein catalyzes the formation, breakage and rearrangement of disulfide bonds. At the cell surface, seems to act as a reductase that cleaves disulfide bonds of proteins attached to the cell. May therefore cause structural modifications of exofacial proteins. Inside the cell, seems to form/rearrange disulfide bonds of nascent proteins. At high concentrations and following phosphorylation by FAM20C, functions as a chaperone that inhibits aggregation of misfolded proteins. At low concentrations, facilitates aggregation (anti-chaperone activity). May be involved with other chaperones in the structural modification of the TG precursor in hormone biogenesis. Also acts as a structural subunit of various enzymes such as prolyl 4-hydroxylase and microsomal triacylglycerol transfer protein MTTP. Receptor for LGALS9; the interaction retains P4HB at the cell surface of Th2 T helper cells, increasing disulfide reductase activity at the plasma membrane, altering the plasma membrane redox state and enhancing cell migration. The chain is Protein disulfide-isomerase (P4HB) from Macaca fuscata fuscata (Japanese macaque).